The chain runs to 92 residues: Integration host factor subunit beta (92 aa).

Belongs to the bacterial histone-like protein family. In terms of assembly, heterodimer of an alpha and a beta chain.

Its function is as follows. This protein is one of the two subunits of integration host factor, a specific DNA-binding protein that functions in genetic recombination as well as in transcriptional and translational control. This Bartonella tribocorum (strain CIP 105476 / IBS 506) protein is Integration host factor subunit beta.